Consider the following 319-residue polypeptide: 7,8-didemethyl-8-hydroxy-5-deazariboflavin synthase (319 aa).

In terms of domain architecture, Radical SAM core spans V6–N236. 3 residues coordinate [4Fe-4S] cluster: C20, C24, and C27.

The protein belongs to the radical SAM superfamily. CofG family. In terms of assembly, consists of two subunits, CofG and CofH. It depends on [4Fe-4S] cluster as a cofactor.

It carries out the reaction 5-amino-5-(4-hydroxybenzyl)-6-(D-ribitylimino)-5,6-dihydrouracil + S-adenosyl-L-methionine = 7,8-didemethyl-8-hydroxy-5-deazariboflavin + 5'-deoxyadenosine + L-methionine + NH4(+) + H(+). It functions in the pathway cofactor biosynthesis; coenzyme F0 biosynthesis. Its function is as follows. Catalyzes the radical-mediated synthesis of 7,8-didemethyl-8-hydroxy-5-deazariboflavin from 5-amino-5-(4-hydroxybenzyl)-6-(D-ribitylimino)-5,6-dihydrouracil. The polypeptide is 7,8-didemethyl-8-hydroxy-5-deazariboflavin synthase (Gloeobacter violaceus (strain ATCC 29082 / PCC 7421)).